The primary structure comprises 280 residues: Inner membrane ABC transporter permease protein YcjP (280 aa).

At 1–10 (MATNKRTLSR) the chain is on the cytoplasmic side. Residues 11–31 (IGFYCGLALFLIITLFPFFVM) form a helical membrane-spanning segment. Residues 32 to 53 (LMTSFKGAKEAISLHPTLLPQQ) lie on the Periplasmic side of the membrane. Residues 54–74 (WTLEHYVDIFNPMIFPFVDYF) traverse the membrane as a helical segment. One can recognise an ABC transmembrane type-1 domain in the interval 74-265 (FRNSLVVSVV…LPVVIMYALS (192 aa)). Residues 75-77 (RNS) lie on the Cytoplasmic side of the membrane. The helical transmembrane segment at 78 to 98 (LVVSVVSSVVAVFLGILGAYA) threads the bilayer. Residues 99–117 (LSRLRFKGRMTINASFYTV) are Periplasmic-facing. A helical membrane pass occupies residues 118-138 (YMFSGILLVVPLFKIITALGI). Residues 139–140 (YD) are Cytoplasmic-facing. A helical transmembrane segment spans residues 141–161 (TEMALIITMVTQTLPTAVFML). Residues 162 to 189 (KSYFDTIPDEIEEAAMMDGLNRLQIIFR) lie on the Periplasmic side of the membrane. The chain crosses the membrane as a helical span at residues 190–210 (ITVPLAMSGLISVFVYCFMVA). Residues 211–214 (WNDY) are Cytoplasmic-facing. The chain crosses the membrane as a helical span at residues 215–235 (LFASIFLSSASNFTLPVGLNA). Residues 236–242 (LFSTPDY) are Periplasmic-facing. Residues 243–263 (IWGRMMAASLVTALPVVIMYA) form a helical membrane-spanning segment. Residues 264–280 (LSERFIKSGLTAGGVKG) lie on the Cytoplasmic side of the membrane.

This sequence belongs to the binding-protein-dependent transport system permease family. MalFG subfamily.

Its subcellular location is the cell inner membrane. Probably part of the binding-protein-dependent transport system YcjNOP. Probably responsible for the translocation of the substrate across the membrane. In Escherichia coli (strain K12), this protein is Inner membrane ABC transporter permease protein YcjP (ycjP).